A 465-amino-acid chain; its full sequence is Pre-mRNA-splicing factor URN1 (465 aa).

Positions M1–L32 constitute a WW domain. Disordered regions lie at residues E28–R49, E144–D198, and E266–V288. S150 is modified (phosphoserine). The segment covering L160–S175 has biased composition (polar residues). Acidic residues predominate over residues G176–E192. Residues D212–E266 enclose the FF domain. Residues E274–V288 are compositionally biased toward acidic residues.

In terms of assembly, component of the precatalytic spliceosomal complex B. Interacts with PRP19.

The protein resides in the nucleus. Its function is as follows. Component of the spliceosome involved in mRNA processing. In Saccharomyces cerevisiae (strain ATCC 204508 / S288c) (Baker's yeast), this protein is Pre-mRNA-splicing factor URN1 (URN1).